Consider the following 456-residue polypeptide: tRNA-2-methylthio-N(6)-dimethylallyladenosine synthase (456 aa).

The region spanning 17–135 (KLYLIQSFGC…LPRMIHQVQE (119 aa)) is the MTTase N-terminal domain. [4Fe-4S] cluster-binding residues include Cys-26, Cys-62, Cys-96, Cys-172, Cys-176, and Cys-179. The Radical SAM core domain occupies 158-387 (RKDKLKAWVT…IELQNLISLE (230 aa)). Residues 390–453 (QREEGRVLEV…PNLLEGEVVP (64 aa)) enclose the TRAM domain.

Belongs to the methylthiotransferase family. MiaB subfamily. As to quaternary structure, monomer. It depends on [4Fe-4S] cluster as a cofactor.

The protein localises to the cytoplasm. It catalyses the reaction N(6)-dimethylallyladenosine(37) in tRNA + (sulfur carrier)-SH + AH2 + 2 S-adenosyl-L-methionine = 2-methylsulfanyl-N(6)-dimethylallyladenosine(37) in tRNA + (sulfur carrier)-H + 5'-deoxyadenosine + L-methionine + A + S-adenosyl-L-homocysteine + 2 H(+). Its function is as follows. Catalyzes the methylthiolation of N6-(dimethylallyl)adenosine (i(6)A), leading to the formation of 2-methylthio-N6-(dimethylallyl)adenosine (ms(2)i(6)A) at position 37 in tRNAs that read codons beginning with uridine. In Desulforamulus reducens (strain ATCC BAA-1160 / DSM 100696 / MI-1) (Desulfotomaculum reducens), this protein is tRNA-2-methylthio-N(6)-dimethylallyladenosine synthase.